The sequence spans 391 residues: Protein ABCI12, chloroplastic (391 aa).

Residues 1 to 63 (MNHSNLANPT…LAAKRVFIVR (63 aa)) constitute a chloroplast transit peptide. 5 consecutive transmembrane segments (helical) span residues 134-154 (ANLVVRLGLVLCTALLSILVL), 168-188 (LLSGILFITLGLGSDGAPPML), 229-249 (VGSTAACLTFIIFQSASICLA), 263-283 (FLFPLTYIGVPVSEIILTLLL), and 370-390 (FASVLCLIGVISTALLSEYFL).

The protein localises to the plastid. Its subcellular location is the chloroplast. It localises to the membrane. The protein is Protein ABCI12, chloroplastic (ABCI12) of Arabidopsis thaliana (Mouse-ear cress).